Here is a 226-residue protein sequence, read N- to C-terminus: Uridylate kinase (226 aa).

An ATP-binding site is contributed by 6–10 (KISGK). UMP is bound at residue G43. The ATP site is built by G44 and R48. UMP-binding positions include D65 and 113–119 (FQPGQST). T139, N140, Y145, and D148 together coordinate ATP.

The protein belongs to the UMP kinase family. In terms of assembly, homohexamer.

It is found in the cytoplasm. It carries out the reaction UMP + ATP = UDP + ADP. It functions in the pathway pyrimidine metabolism; CTP biosynthesis via de novo pathway; UDP from UMP (UMPK route): step 1/1. Its activity is regulated as follows. Inhibited by UTP. Functionally, catalyzes the reversible phosphorylation of UMP to UDP. This is Uridylate kinase from Saccharolobus islandicus (strain M.16.27) (Sulfolobus islandicus).